Consider the following 634-residue polypeptide: Threonine--tRNA ligase (634 aa).

The 61-residue stretch at 1–61 (MINITLPDGS…DHDASLRIIT (61 aa)) folds into the TGS domain. The tract at residues 243 to 534 (DHRRIGKAQD…LIEHHAGAFP (292 aa)) is catalytic. C334, H385, and H511 together coordinate Zn(2+).

This sequence belongs to the class-II aminoacyl-tRNA synthetase family. Homodimer. Zn(2+) serves as cofactor.

Its subcellular location is the cytoplasm. It catalyses the reaction tRNA(Thr) + L-threonine + ATP = L-threonyl-tRNA(Thr) + AMP + diphosphate + H(+). In terms of biological role, catalyzes the attachment of threonine to tRNA(Thr) in a two-step reaction: L-threonine is first activated by ATP to form Thr-AMP and then transferred to the acceptor end of tRNA(Thr). Also edits incorrectly charged L-seryl-tRNA(Thr). The polypeptide is Threonine--tRNA ligase (Xanthomonas euvesicatoria pv. vesicatoria (strain 85-10) (Xanthomonas campestris pv. vesicatoria)).